A 96-amino-acid chain; its full sequence is Small ribosomal subunit protein bS6 (96 aa).

This sequence belongs to the bacterial ribosomal protein bS6 family.

Functionally, binds together with bS18 to 16S ribosomal RNA. This Bacillus mycoides (strain KBAB4) (Bacillus weihenstephanensis) protein is Small ribosomal subunit protein bS6.